Consider the following 187-residue polypeptide: Troponin I, slow skeletal muscle (187 aa).

Residue P2 is modified to N-acetylproline. Residues 2–48 (PEVERKPKITASRKLLLKSLMLAKAKECWEQEHEEREAEKVRYLAER) form an involved in binding TNC region. S58 carries the post-translational modification Phosphoserine. Residues 97-118 (LKLKVMDLRGKFKRPPLRRVRV) are involved in binding TNC and actin.

Belongs to the troponin I family. As to quaternary structure, binds to actin and tropomyosin. As to expression, highest levels observed in human skeletal muscle (e.g. gastrocnemious muscle), differentiated cultures of primary human muscle cells and rhabdomyosarcoma cells cultured in low serum medium. Expressed in C2 muscle cell myoblasts and myotubes.

In terms of biological role, troponin I is the inhibitory subunit of troponin, the thin filament regulatory complex which confers calcium-sensitivity to striated muscle actomyosin ATPase activity. The sequence is that of Troponin I, slow skeletal muscle (TNNI1) from Homo sapiens (Human).